The following is a 238-amino-acid chain: Pre-protein VI (238 aa).

A propeptide spanning residues 1–33 (MDAVNFSILAPRYGSHPMMSAWSGIGTSDMNGG) is cleaved from the precursor. The amphipathic alpha-helix essential for membrane lytic activity stretch occupies residues 34–54 (AFNWGGIWSGIKNFGSNVKNW). The tract at residues 36 to 53 (NWGGIWSGIKNFGSNVKN) is involved in endosomal membrane lysis. Residues 48-74 (GSNVKNWGSRAWNSQTGKLLRQKLNDT) are interaction with hexon protein. Positions 67 to 76 (LRQKLNDTKV) match the Nuclear export signal motif. Residues 153–156 (PPSY) carry the PPXY motif motif. The disordered stretch occupies residues 187-212 (TLELKPSDQPPPYSPQSSNMPVTAPV). Residues 219 to 230 (GTLANIVGVGLS) carry the Nuclear export signal motif. Residues 221-227 (LANIVGV) form an interaction with hexon protein region. A binds to importin alpha/beta, involved in hexon nuclear import region spans residues 228 to 238 (GLSNVKRRRCF). The short motif at 233–236 (KRRR) is the Nuclear localization signal element.

The protein belongs to the adenoviridae protein VI family. Interacts with hexon protein; this interaction allows nuclear import of hexon trimers and possibly pre-capsid assembly. Interacts (via C-terminal NLS) with importin alpha/beta. In terms of assembly, interacts (via PPxY motif) with host NEDD4 ubiquitine ligase; this interaction might play a role in virus intracellular transport during entry. Part of a complex composed of the core-capsid bridging protein, the endosome lysis protein VI and the hexon-linking protein VIII; these interactions bridge the virus core to the capsid. Interacts with peripentonal hexons; this interaction stabilizes the capsid by gluing two peripentonal hexons together and joining them with an adjacent group-of-nine hexon. As to quaternary structure, heterodimer with the viral protease; disulfide-linked. Interacts with the viral protease. In terms of processing, ubiquitinated by Nedd4 following partial capsid disassembly; which might play a role in intracellular virus movement during entry. Contains the major nuclear import and export signals. Proteolytically removed during virion maturation. The processing of the C-terminus turns the precursor into a mature viral structural protein and abrogates its ability to promote hexon import and act as a potential chaperone protein.

The protein resides in the host nucleus. The protein localises to the host cytoplasm. It localises to the virion. Functionally, during virus assembly, promotes hexon trimers nuclear import through nuclear pore complexes via an importin alpha/beta-dependent mechanism. By analogy to herpesviruses capsid assembly, might act as a chaperone to promote the formation of the icosahedral capsid. In terms of biological role, structural component of the virion that provides increased stability to the particle shell through its interaction with the core-capsid bridging protein and the hexon-linking protein VIII. Fibers shedding during virus entry into host cell allows the endosome lysis protein to be exposed as a membrane-lytic peptide. Exhibits pH-independent membrane fragmentation activity and probably mediates viral rapid escape from host endosome via organellar membrane lysis. It is not clear if it then remains partially associated with the capsid and involved in the intracellular microtubule-dependent transport of capsid to the nucleus, or if it is lost during endosomal penetration. Its function is as follows. Cofactor that activates the viral protease. Binds to viral protease in a 1:1 ratio. This is Pre-protein VI from Canis lupus familiaris (Dog).